The sequence spans 225 residues: 2-C-methyl-D-erythritol 4-phosphate cytidylyltransferase (225 aa).

It belongs to the IspD/TarI cytidylyltransferase family. IspD subfamily.

The enzyme catalyses 2-C-methyl-D-erythritol 4-phosphate + CTP + H(+) = 4-CDP-2-C-methyl-D-erythritol + diphosphate. It participates in isoprenoid biosynthesis; isopentenyl diphosphate biosynthesis via DXP pathway; isopentenyl diphosphate from 1-deoxy-D-xylulose 5-phosphate: step 2/6. Functionally, catalyzes the formation of 4-diphosphocytidyl-2-C-methyl-D-erythritol from CTP and 2-C-methyl-D-erythritol 4-phosphate (MEP). In Cereibacter sphaeroides (strain ATCC 17023 / DSM 158 / JCM 6121 / CCUG 31486 / LMG 2827 / NBRC 12203 / NCIMB 8253 / ATH 2.4.1.) (Rhodobacter sphaeroides), this protein is 2-C-methyl-D-erythritol 4-phosphate cytidylyltransferase.